We begin with the raw amino-acid sequence, 302 residues long: Pyridoxal kinase (302 aa).

The substrate site is built by Ser-10, Thr-45, and Tyr-122. ATP-binding positions include 181 to 182 (TS) and 215 to 227 (VGPKFNDYYTGTG). A substrate-binding site is contributed by Asp-228.

Belongs to the pyridoxine kinase family. In terms of assembly, homodimer. Requires a divalent metal cation as cofactor.

The protein resides in the cytoplasm. It catalyses the reaction pyridoxal + ATP = pyridoxal 5'-phosphate + ADP + H(+). Its pathway is cofactor metabolism; pyridoxal 5'-phosphate salvage; pyridoxal 5'-phosphate from pyridoxal: step 1/1. Functionally, required for synthesis of pyridoxal-5-phosphate from vitamin B6. The protein is Pyridoxal kinase (pykA) of Dictyostelium discoideum (Social amoeba).